The chain runs to 483 residues: Glutamyl-tRNA(Gln) amidotransferase subunit A (483 aa).

Active-site charge relay system residues include K76 and S151. S175 serves as the catalytic Acyl-ester intermediate.

The protein belongs to the amidase family. GatA subfamily. Heterotrimer of A, B and C subunits.

The enzyme catalyses L-glutamyl-tRNA(Gln) + L-glutamine + ATP + H2O = L-glutaminyl-tRNA(Gln) + L-glutamate + ADP + phosphate + H(+). Allows the formation of correctly charged Gln-tRNA(Gln) through the transamidation of misacylated Glu-tRNA(Gln) in organisms which lack glutaminyl-tRNA synthetase. The reaction takes place in the presence of glutamine and ATP through an activated gamma-phospho-Glu-tRNA(Gln). This is Glutamyl-tRNA(Gln) amidotransferase subunit A from Pseudomonas fluorescens (strain ATCC BAA-477 / NRRL B-23932 / Pf-5).